We begin with the raw amino-acid sequence, 78 residues long: MSRRCDLTGKKANNAFAVSHSHRRTKRLQQVNLQNKRVWWPSGNRWVKLKLSTKAIKTLEVKGLEAMAKEAGINLNHY.

It belongs to the bacterial ribosomal protein bL28 family.

This Nostoc sp. (strain PCC 7120 / SAG 25.82 / UTEX 2576) protein is Large ribosomal subunit protein bL28.